Consider the following 194-residue polypeptide: dITP/XTP pyrophosphatase (194 aa).

9 to 14 (THNPGK) serves as a coordination point for substrate. Residues D40 and D69 each coordinate Mg(2+). D69 acts as the Proton acceptor in catalysis. Substrate-binding positions include S70, 152-155 (FGYD), K175, and 180-181 (HR).

Belongs to the HAM1 NTPase family. Homodimer. Requires Mg(2+) as cofactor.

It carries out the reaction XTP + H2O = XMP + diphosphate + H(+). The enzyme catalyses dITP + H2O = dIMP + diphosphate + H(+). The catalysed reaction is ITP + H2O = IMP + diphosphate + H(+). Its function is as follows. Pyrophosphatase that catalyzes the hydrolysis of nucleoside triphosphates to their monophosphate derivatives, with a high preference for the non-canonical purine nucleotides XTP (xanthosine triphosphate), dITP (deoxyinosine triphosphate) and ITP. Seems to function as a house-cleaning enzyme that removes non-canonical purine nucleotides from the nucleotide pool, thus preventing their incorporation into DNA/RNA and avoiding chromosomal lesions. The protein is dITP/XTP pyrophosphatase of Caulobacter vibrioides (strain ATCC 19089 / CIP 103742 / CB 15) (Caulobacter crescentus).